We begin with the raw amino-acid sequence, 215 residues long: Putative BTB/POZ domain-containing protein At2g05330 (215 aa).

One can recognise a BTB domain in the interval 17–87 (SWQKIGKLTY…LYSDGSMLSS (71 aa)).

It participates in protein modification; protein ubiquitination. Its function is as follows. May act as a substrate-specific adapter of an E3 ubiquitin-protein ligase complex (CUL3-RBX1-BTB) which mediates the ubiquitination and subsequent proteasomal degradation of target proteins. This chain is Putative BTB/POZ domain-containing protein At2g05330, found in Arabidopsis thaliana (Mouse-ear cress).